We begin with the raw amino-acid sequence, 649 residues long: Acetyl-coenzyme A synthetase (649 aa).

CoA contacts are provided by residues 190–193 (RGGR) and threonine 310. ATP is bound by residues 386–388 (GEP), 410–415 (DTWWQT), aspartate 499, and arginine 514. Serine 522 contacts CoA. An ATP-binding site is contributed by arginine 525. Positions 536, 538, and 541 each coordinate Mg(2+). Arginine 583 contacts CoA. At lysine 608 the chain carries N6-acetyllysine.

The protein belongs to the ATP-dependent AMP-binding enzyme family. The cofactor is Mg(2+). Acetylated. Deacetylation by the SIR2-homolog deacetylase activates the enzyme.

The catalysed reaction is acetate + ATP + CoA = acetyl-CoA + AMP + diphosphate. In terms of biological role, catalyzes the conversion of acetate into acetyl-CoA (AcCoA), an essential intermediate at the junction of anabolic and catabolic pathways. AcsA undergoes a two-step reaction. In the first half reaction, AcsA combines acetate with ATP to form acetyl-adenylate (AcAMP) intermediate. In the second half reaction, it can then transfer the acetyl group from AcAMP to the sulfhydryl group of CoA, forming the product AcCoA. This Methylorubrum populi (strain ATCC BAA-705 / NCIMB 13946 / BJ001) (Methylobacterium populi) protein is Acetyl-coenzyme A synthetase.